A 344-amino-acid polypeptide reads, in one-letter code: Probable pectinesterase 67 (344 aa).

The first 23 residues, 1–23 (MGHRTRMILVLTLVVMSIWGSDA), serve as a signal peptide directing secretion. Asn43 and Asn151 each carry an N-linked (GlcNAc...) asparagine glycan. Gln152 lines the substrate pocket. Catalysis depends on Asp196, which acts as the Nucleophile. Position 256 (Arg256) interacts with substrate. Asn282 is a glycosylation site (N-linked (GlcNAc...) asparagine).

This sequence belongs to the pectinesterase family. As to expression, expressed in flower buds.

Its subcellular location is the secreted. It localises to the cell wall. The catalysed reaction is [(1-&gt;4)-alpha-D-galacturonosyl methyl ester](n) + n H2O = [(1-&gt;4)-alpha-D-galacturonosyl](n) + n methanol + n H(+). It participates in glycan metabolism; pectin degradation; 2-dehydro-3-deoxy-D-gluconate from pectin: step 1/5. Its function is as follows. Acts in the modification of cell walls via demethylesterification of cell wall pectin. In Arabidopsis thaliana (Mouse-ear cress), this protein is Probable pectinesterase 67 (PME67).